The chain runs to 956 residues: Glutamate receptor ionotropic, kainate 4 (956 aa).

Positions 1–20 (MPRVSAPLVLLPAWLLMVAC) are cleaved as a signal peptide. Over 21–545 (SPHSLRIAAI…YFSFLDPFSP (525 aa)) the chain is Extracellular. Asn158, Asn220, Asn272, Asn286, Asn323, Asn408, Asn415, and Asn479 each carry an N-linked (GlcNAc...) asparagine glycan. Residues Gly500, Thr502, and Arg507 each coordinate L-glutamate. Residues 546-566 (GVWLFMLLAYLAVSCVLFLVA) traverse the membrane as a helical segment. Residues 567–623 (RLTPYEWYSPHPCAQGRCNLLVNQYSLGNSLWFPVGGFMQQGSTIAPRALSTRCVSG) lie on the Cytoplasmic side of the membrane. The helical transmembrane segment at 624–644 (VWWAFTLIIISSYTANLAAFL) threads the bilayer. The Extracellular segment spans residues 645–804 (TVQRMEVPIE…HRAKGLGMEN (160 aa)). Positions 674, 675, and 723 each coordinate L-glutamate. The N-linked (GlcNAc...) asparagine glycan is linked to Asn736. A helical transmembrane segment spans residues 805–825 (IGGIFVVLICGLIVAIFMAML). Over 826–956 (EFLWTLRHSE…DKTTNSSEPE (131 aa)) the chain is Cytoplasmic. The tract at residues 931–956 (LRARPSPARSEESLEWDKTTNSSEPE) is disordered. The segment covering 939 to 948 (RSEESLEWDK) has biased composition (basic and acidic residues).

The protein belongs to the glutamate-gated ion channel (TC 1.A.10.1) family. GRIK4 subfamily. In terms of assembly, homodimer. Can form functional heteromeric receptors with GRIK1, GRIK2 and GRIK3 subunits. Forms a heteromeric complex with GRIK2. Expressed in the hippocampus and cerebellum (at protein level).

It is found in the cell membrane. The protein resides in the postsynaptic cell membrane. The protein localises to the presynaptic cell membrane. Its function is as follows. Ionotropic glutamate receptor that functions as a cation-permeable ligand-gated ion channel. Cannot form functional channels on its own and produces channel activity only in heteromeric assembly with GRIK1, GRIK2 and GRIK3 subunits. The sequence is that of Glutamate receptor ionotropic, kainate 4 (Grik4) from Mus musculus (Mouse).